Consider the following 290-residue polypeptide: Fructose-1,6-bisphosphatase class 1 (290 aa).

Residues E78, D96, L98, and D99 each coordinate Mg(2+). Substrate is bound by residues 99 to 102, Y201, and K226; that span reads DGSS. E232 serves as a coordination point for Mg(2+).

The protein belongs to the FBPase class 1 family. Homotetramer. The cofactor is Mg(2+).

It is found in the cytoplasm. It catalyses the reaction beta-D-fructose 1,6-bisphosphate + H2O = beta-D-fructose 6-phosphate + phosphate. Its pathway is carbohydrate biosynthesis; gluconeogenesis. In Helicobacter pylori (strain J99 / ATCC 700824) (Campylobacter pylori J99), this protein is Fructose-1,6-bisphosphatase class 1.